The chain runs to 177 residues: NADH-quinone oxidoreductase subunit B (177 aa).

Residues Cys36, Cys37, Cys101, and Cys130 each coordinate [4Fe-4S] cluster.

This sequence belongs to the complex I 20 kDa subunit family. In terms of assembly, NDH-1 is composed of 14 different subunits. Subunits NuoB, C, D, E, F, and G constitute the peripheral sector of the complex. It depends on [4Fe-4S] cluster as a cofactor.

It is found in the cell inner membrane. It carries out the reaction a quinone + NADH + 5 H(+)(in) = a quinol + NAD(+) + 4 H(+)(out). NDH-1 shuttles electrons from NADH, via FMN and iron-sulfur (Fe-S) centers, to quinones in the respiratory chain. The immediate electron acceptor for the enzyme in this species is believed to be ubiquinone. Couples the redox reaction to proton translocation (for every two electrons transferred, four hydrogen ions are translocated across the cytoplasmic membrane), and thus conserves the redox energy in a proton gradient. This Hydrogenobaculum sp. (strain Y04AAS1) protein is NADH-quinone oxidoreductase subunit B.